The sequence spans 312 residues: Olfactory receptor 7D4 (312 aa).

The Extracellular segment spans residues 1–25 (MEAENLTELSKFLLLGLSDDPELQP). An N-linked (GlcNAc...) asparagine glycan is attached at asparagine 5. A helical transmembrane segment spans residues 26-46 (VLFGLFLSMYLVTVLGNLLII). Over 47 to 54 (LAVSSDSH) the chain is Cytoplasmic. A helical membrane pass occupies residues 55-75 (LHTPMYFFLSNLSFVDICFIS). Residues 76–99 (TTVPKMLVSIQARSKDISYMGCLT) lie on the Extracellular side of the membrane. Residues cysteine 97 and cysteine 189 are joined by a disulfide bond. A helical membrane pass occupies residues 100–120 (QVYFLMMFAGMDTFLLAVMAY). Residues 121-139 (DRFVAICHPLHYTVIMNPC) are Cytoplasmic-facing. The chain crosses the membrane as a helical span at residues 140–160 (LCGLLVLASWFIIFWFSLVHI). Topologically, residues 161-197 (LLMKRLTFSTGTEIPHFFCEPAQVLKVACSNTLLNNI) are extracellular. The chain crosses the membrane as a helical span at residues 198 to 217 (VLYVATALLGVFPVAGILFS). Over 218 to 237 (YSQIVSSLMGMSSTKGKYKA) the chain is Cytoplasmic. The helical transmembrane segment at 238 to 258 (FSTCGSHLCVVSLFYGTGLGV) threads the bilayer. Residues 259 to 271 (YLSSAVTHSSQSS) are Extracellular-facing. The helical transmembrane segment at 272–292 (STASVMYAMVTPMLNPFIYSL) threads the bilayer. The Cytoplasmic portion of the chain corresponds to 293–312 (RNKDVKGALERLLSRADSCP).

This sequence belongs to the G-protein coupled receptor 1 family. As to expression, nasal olfactory epithelium.

The protein localises to the cell membrane. Functionally, odorant receptor. Selectively activated by androstenone and the related odorous steroid androstadienone. This is Olfactory receptor 7D4 (OR7D4) from Homo sapiens (Human).